A 212-amino-acid polypeptide reads, in one-letter code: Thymidylate kinase (212 aa).

10 to 17 (GPEGAGKT) serves as a coordination point for ATP.

It belongs to the thymidylate kinase family.

The catalysed reaction is dTMP + ATP = dTDP + ADP. Phosphorylation of dTMP to form dTDP in both de novo and salvage pathways of dTTP synthesis. The protein is Thymidylate kinase of Bacillus pumilus (strain SAFR-032).